The chain runs to 400 residues: NADH-ubiquinone oxidoreductase 49 kDa subunit (400 aa).

Belongs to the complex I 49 kDa subunit family.

The protein resides in the mitochondrion. The catalysed reaction is a ubiquinone + NADH + 5 H(+)(in) = a ubiquinol + NAD(+) + 4 H(+)(out). Functionally, core subunit of the mitochondrial membrane respiratory chain NADH dehydrogenase (Complex I) that is believed to belong to the minimal assembly required for catalysis. Complex I functions in the transfer of electrons from NADH to the respiratory chain. The immediate electron acceptor for the enzyme is believed to be ubiquinone. Component of the iron-sulfur (IP) fragment of the enzyme. Component of the iron-sulfur (IP) fragment of the enzyme. This is NADH-ubiquinone oxidoreductase 49 kDa subunit (NAD7) from Prototheca wickerhamii.